A 94-amino-acid polypeptide reads, in one-letter code: Translation initiation factor IF-1 (94 aa).

The 72-residue stretch at 1-72 (MAKEELIQFE…EKGRLIFRHK (72 aa)) folds into the S1-like domain. The tract at residues 71 to 94 (HKDERPGGTGAPRGAPPRGQFRRR) is disordered. Over residues 82–94 (PRGAPPRGQFRRR) the composition is skewed to low complexity.

The protein belongs to the IF-1 family. As to quaternary structure, component of the 30S ribosomal translation pre-initiation complex which assembles on the 30S ribosome in the order IF-2 and IF-3, IF-1 and N-formylmethionyl-tRNA(fMet); mRNA recruitment can occur at any time during PIC assembly.

The protein localises to the cytoplasm. Its function is as follows. One of the essential components for the initiation of protein synthesis. Stabilizes the binding of IF-2 and IF-3 on the 30S subunit to which N-formylmethionyl-tRNA(fMet) subsequently binds. Helps modulate mRNA selection, yielding the 30S pre-initiation complex (PIC). Upon addition of the 50S ribosomal subunit IF-1, IF-2 and IF-3 are released leaving the mature 70S translation initiation complex. The sequence is that of Translation initiation factor IF-1 from Rhodopseudomonas palustris (strain BisB5).